A 303-amino-acid chain; its full sequence is Probable cell division protein WhiA (303 aa).

Positions 272 to 303 (SIQQLADSLSTPLTKSGVNHRLRKINKIADEL) form a DNA-binding region, H-T-H motif.

It belongs to the WhiA family.

In terms of biological role, involved in cell division and chromosome segregation. The protein is Probable cell division protein WhiA of Streptococcus pneumoniae serotype 2 (strain D39 / NCTC 7466).